A 494-amino-acid polypeptide reads, in one-letter code: NAD(P)H-quinone oxidoreductase subunit 2 B, chloroplastic (494 aa).

A run of 14 helical transmembrane segments spans residues 13 to 33 (SILPECILILSLIVTIIIDLI), 39 to 59 (TPWLYLVSLTALVTSVVILLF), 81 to 101 (IFRLFILICSLLCIPLSIDYI), 107 to 127 (ALTEFLLFILTATLGGMFLCC), 131 to 151 (LVTIFVALECLGLSSYLLSGY), 166 to 186 (LLMGGASSSILVYGFSLLYGL), 211 to 231 (MFISMIFLLVGVGFKLSLVPF), 243 to 263 (PTPVVAFFSVTSKVAALALAT), 277 to 297 (WHLLLEILAISSMILGNFIAV), 305 to 325 (MLAYSSISQIGYIIIGVIAAE), 336 to 356 (YMLIYIFMNLGTFACITLFGL), 378 to 398 (LSLVLCLLSLGGIPPLSGFFG), 411 to 433 (LYFLVPIALSTSVISMYYYLKII), and 468 to 488 (MIICVVASTLPGILINPIIAI).

It belongs to the complex I subunit 2 family. NDH is composed of at least 16 different subunits, 5 of which are encoded in the nucleus.

Its subcellular location is the plastid. It localises to the chloroplast thylakoid membrane. It catalyses the reaction a plastoquinone + NADH + (n+1) H(+)(in) = a plastoquinol + NAD(+) + n H(+)(out). The catalysed reaction is a plastoquinone + NADPH + (n+1) H(+)(in) = a plastoquinol + NADP(+) + n H(+)(out). Functionally, NDH shuttles electrons from NAD(P)H:plastoquinone, via FMN and iron-sulfur (Fe-S) centers, to quinones in the photosynthetic chain and possibly in a chloroplast respiratory chain. The immediate electron acceptor for the enzyme in this species is believed to be plastoquinone. Couples the redox reaction to proton translocation, and thus conserves the redox energy in a proton gradient. The chain is NAD(P)H-quinone oxidoreductase subunit 2 B, chloroplastic from Angiopteris evecta (Mule's foot fern).